The primary structure comprises 355 residues: DNA polymerase IV (355 aa).

In terms of domain architecture, UmuC spans 14 to 198; that stretch reads IIHVDMDAFF…LPVEKFHGVG (185 aa). Residues aspartate 18 and aspartate 116 each coordinate Mg(2+). Glutamate 117 is an active-site residue.

The protein belongs to the DNA polymerase type-Y family. In terms of assembly, monomer. Mg(2+) serves as cofactor.

It is found in the cytoplasm. The enzyme catalyses DNA(n) + a 2'-deoxyribonucleoside 5'-triphosphate = DNA(n+1) + diphosphate. In terms of biological role, poorly processive, error-prone DNA polymerase involved in untargeted mutagenesis. Copies undamaged DNA at stalled replication forks, which arise in vivo from mismatched or misaligned primer ends. These misaligned primers can be extended by PolIV. Exhibits no 3'-5' exonuclease (proofreading) activity. May be involved in translesional synthesis, in conjunction with the beta clamp from PolIII. This chain is DNA polymerase IV, found in Streptococcus suis (strain 98HAH33).